Reading from the N-terminus, the 432-residue chain is Enolase (432 aa).

Residue Gln-167 coordinates (2R)-2-phosphoglycerate. The active-site Proton donor is Glu-209. Mg(2+) contacts are provided by Asp-246, Glu-290, and Asp-317. Lys-342, Arg-371, Ser-372, and Lys-393 together coordinate (2R)-2-phosphoglycerate. Residue Lys-342 is the Proton acceptor of the active site.

This sequence belongs to the enolase family. Component of the RNA degradosome, a multiprotein complex involved in RNA processing and mRNA degradation. The cofactor is Mg(2+).

The protein resides in the cytoplasm. Its subcellular location is the secreted. The protein localises to the cell surface. It catalyses the reaction (2R)-2-phosphoglycerate = phosphoenolpyruvate + H2O. The protein operates within carbohydrate degradation; glycolysis; pyruvate from D-glyceraldehyde 3-phosphate: step 4/5. Functionally, catalyzes the reversible conversion of 2-phosphoglycerate (2-PG) into phosphoenolpyruvate (PEP). It is essential for the degradation of carbohydrates via glycolysis. The protein is Enolase of Klebsiella pneumoniae (strain 342).